Consider the following 547-residue polypeptide: KsdD-like steroid dehydrogenase MSMEG_5835 (547 aa).

Position 5-36 (5-36 (DVIVVGAGLAGLVAACELVERGHSVIIVDQEN)) interacts with FAD.

This sequence belongs to the FAD-dependent oxidoreductase 2 family. FAD serves as cofactor.

Its pathway is lipid metabolism; steroid biosynthesis. Able to catalyze the elimination of the C-1 and C-2 hydrogen atoms of the A-ring from the polycyclic ring structure of 3-ketosteroids, but the ketosteroid dehydrogenase activity is low compared to KsdD in the cholesterol degradation process. The low activity could be due to different substrate specificity. The protein is KsdD-like steroid dehydrogenase MSMEG_5835 of Mycolicibacterium smegmatis (strain ATCC 700084 / mc(2)155) (Mycobacterium smegmatis).